Here is a 465-residue protein sequence, read N- to C-terminus: 6-phospho-beta-glucosidase (465 aa).

Catalysis depends on Glu-173, which acts as the Proton donor. Glu-362 serves as the catalytic Nucleophile.

This sequence belongs to the glycosyl hydrolase 1 family.

It carries out the reaction 6-phospho-beta-D-glucosyl-(1-&gt;4)-D-glucose + H2O = D-glucose 6-phosphate + D-glucose. The protein operates within carbohydrate metabolism; beta-glucoside metabolism. The chain is 6-phospho-beta-glucosidase (arbB) from Dickeya chrysanthemi (Pectobacterium chrysanthemi).